An 82-amino-acid chain; its full sequence is Small ribosomal subunit protein bS18 (82 aa).

The span at 1–10 shows a compositional bias: polar residues; sequence MTDTNQNSSR. The interval 1–21 is disordered; it reads MTDTNQNSSRRPFHRRRKTCP.

Belongs to the bacterial ribosomal protein bS18 family. In terms of assembly, part of the 30S ribosomal subunit. Forms a tight heterodimer with protein bS6.

In terms of biological role, binds as a heterodimer with protein bS6 to the central domain of the 16S rRNA, where it helps stabilize the platform of the 30S subunit. The sequence is that of Small ribosomal subunit protein bS18 from Bartonella tribocorum (strain CIP 105476 / IBS 506).